The sequence spans 957 residues: MSETNSAAETAAPHRYTAAMAADIEARWQDFWDAEGTYEAPNPTGDLAGDPELAARPKKFIMDMFPYPSGAGLHVGHPLGYIATDVYARHQRMTGHNVLHTLGFDAFGLPAEQYAVQTGTHPRVSTEANMENMKVQLRRLGLGHDNRRSFATIDSEYYKWTQWIFLQIFNSWYDSEADRARPIAELVEQFENGTRATPDGREWGALSAAERADLLSEYRLAYASDAPVNWSPGLGTVLANEEVTADGRSERGNFPVFKAKLRQWNMRITAYADRLLNDLDGLDWPEAIKLQQRNWIGRSEGARVEFPVDTAGGITVFTTRQDTLFGATYMVLAPEHDMVERIIPAAWPEGTHPVWTGGHASPAEAVTAYRKQAAAKSDVERQAEAKDKTGVFTGAYATNPVSGEKVPVFIADYVLMGYGTGAIMAVPAHDARDFAFARAFELPMRCVVQPSDDRGTDPATWDDAFSSYDAKLVNSANDEISLDGLGVVEAKARITEWLKEHGVGEGTVNFRLRDWLFSRQRYWGEPFPIVYDEDGIAHPLPESMLPLELPEVEDYSPRTFDPEDATAQPETPLSRNADWVNVTLDLGDGAGPRKYRRETNTMPNWAGSCWYELRYLDPNNDRQLVDPSIEQYWMGPREGQPTGGVDLYVGGAEHAVLHLLYARFWSKVLHDLGHISSAEPFHKLYNQGMIQAFVYRDSRGIAVPAAEVEERDGAFYHAGEKVSRVLGKMGKSLKNAVTPDEICAEYGADTLRLYEMAMGPLDVSRPWDTRAVVGQYRLLQRLWRNVVDEATGEVTVVDTEPDEDTLRALHKAIDGVGQDMAGMRFNTAIAKVTELNNHLTKAGGPLSRSVAERLVLLIAPLAPHIAEELWRRLGHADSVVHQDFPVADPAYVVDETVTCVVQIKGKVRARLEISPAITDEELEALALADEAVVAALGGAGIRKVIVRAPKLVNIVPA.

The 'HIGH' region motif lies at 66 to 77; it reads PYPSGAGLHVGH. A 'KMSKS' region motif is present at residues 728 to 732; sequence KMGKS. Lys-731 contacts ATP.

The protein belongs to the class-I aminoacyl-tRNA synthetase family.

It is found in the cytoplasm. The enzyme catalyses tRNA(Leu) + L-leucine + ATP = L-leucyl-tRNA(Leu) + AMP + diphosphate. The polypeptide is Leucine--tRNA ligase (Streptomyces griseus subsp. griseus (strain JCM 4626 / CBS 651.72 / NBRC 13350 / KCC S-0626 / ISP 5235)).